Consider the following 154-residue polypeptide: MRCPFCGNVDTQVKDSRPAEDNVAIRRRRFCPACGGRFTTYERVQLRDLVVVKSSGRREDFDRTKLERSIRIAMQKRPIEPERIDQMISGIVRRLESMGDTDIPSKVIGEIVMETLARIDTVAYVRFASVYKNFQAADDFDKFVSELRPGLVEE.

A zinc finger spans residues 3–34 (CPFCGNVDTQVKDSRPAEDNVAIRRRRFCPAC). One can recognise an ATP-cone domain in the interval 49 to 139 (LVVVKSSGRR…VYKNFQAADD (91 aa)).

The protein belongs to the NrdR family. The cofactor is Zn(2+).

Negatively regulates transcription of bacterial ribonucleotide reductase nrd genes and operons by binding to NrdR-boxes. The protein is Transcriptional repressor NrdR of Paracoccus denitrificans (strain Pd 1222).